A 360-amino-acid chain; its full sequence is MTTIRQQRSSLLKGWPQFCEWVTSTDNRIYVGWFGVLMIPCLLAAAICFVVAFIAAPPVDIDGIREPVAGSFLYGNNIISGAVVPSSNAIGLHFYPIWEAATLDEWLYNGGPYQLVIFHFLIGICGWMGRQWELSYRLGMRPWICVAYSAPVSAAFAVFLVYPFGQGSFSDGMPLGISGTFNFMFVFQAEHNILMHPFHMAGVAGMFGGSLFSAMHGSLVTSSLIRETTETESQNYGYKFGQEEETYNIVAAHGYFGRLIFQYASFNNSRSLHFFLAIFPVVCVWLTSMGICTMAFNLNGFNFNQSVVDANGKVVPTWGDVLNRANLGMEVMHERNAHNFPLDLAAAESTSVALVAPSIG.

Transmembrane regions (helical) follow at residues 30–47 (YVGW…AAAI), 119–134 (HFLI…QWEL), and 143–157 (WICV…AAFA). His119 is a chlorophyll a binding site. Trp127 provides a ligand contact to pheophytin a. Asp171 and Glu190 together coordinate [CaMn4O5] cluster. A helical membrane pass occupies residues 198-219 (FHMAGVAGMFGGSLFSAMHGSL). Residue His199 participates in chlorophyll a binding. A quinone contacts are provided by residues His216 and 265–266 (SF). Position 216 (His216) interacts with Fe cation. His273 contacts Fe cation. A helical membrane pass occupies residues 275–289 (FLAIFPVVCVWLTSM). 4 residues coordinate [CaMn4O5] cluster: His333, Glu334, Asp343, and Ala345. Residues 346–360 (AAESTSVALVAPSIG) constitute a propeptide that is removed on maturation.

The protein belongs to the reaction center PufL/M/PsbA/D family. As to quaternary structure, PSII is composed of 1 copy each of membrane proteins PsbA, PsbB, PsbC, PsbD, PsbE, PsbF, PsbH, PsbI, PsbJ, PsbK, PsbL, PsbM, PsbT, PsbX, PsbY, Psb30/Ycf12, peripheral proteins PsbO, CyanoQ (PsbQ), PsbU, PsbV and a large number of cofactors. It forms dimeric complexes. The cofactor is The D1/D2 heterodimer binds P680, chlorophylls that are the primary electron donor of PSII, and subsequent electron acceptors. It shares a non-heme iron and each subunit binds pheophytin, quinone, additional chlorophylls, carotenoids and lipids. D1 provides most of the ligands for the Mn4-Ca-O5 cluster of the oxygen-evolving complex (OEC). There is also a Cl(-1) ion associated with D1 and D2, which is required for oxygen evolution. The PSII complex binds additional chlorophylls, carotenoids and specific lipids.. In terms of processing, tyr-162 forms a radical intermediate that is referred to as redox-active TyrZ, YZ or Y-Z. Post-translationally, C-terminally processed by CtpA; processing is essential to allow assembly of the oxygen-evolving complex and thus photosynthetic growth.

The protein localises to the cellular thylakoid membrane. The catalysed reaction is 2 a plastoquinone + 4 hnu + 2 H2O = 2 a plastoquinol + O2. Photosystem II (PSII) is a light-driven water:plastoquinone oxidoreductase that uses light energy to abstract electrons from H(2)O, generating O(2) and a proton gradient subsequently used for ATP formation. It consists of a core antenna complex that captures photons, and an electron transfer chain that converts photonic excitation into a charge separation. The D1/D2 (PsbA/PsbD) reaction center heterodimer binds P680, the primary electron donor of PSII as well as several subsequent electron acceptors. This Prochlorococcus marinus (strain SARG / CCMP1375 / SS120) protein is Photosystem II protein D1.